Reading from the N-terminus, the 232-residue chain is Ubiquitin carboxyl-terminal hydrolase UCHL3 (232 aa).

The UCH catalytic domain maps to 6-225 (IWTPLESNPD…LRFSALAVIP (220 aa)). Positions 10–14 (LESNP) are interaction with ubiquitin. The active-site Nucleophile is the C92. Positions 151–159 (QVENRDDIL) are crossover loop which restricts access of large ubiquitin adducts to the active site. An interaction with ubiquitin region spans residues 163–165 (THF). H164 serves as the catalytic Proton donor.

This sequence belongs to the peptidase C12 family.

It carries out the reaction Thiol-dependent hydrolysis of ester, thioester, amide, peptide and isopeptide bonds formed by the C-terminal Gly of ubiquitin (a 76-residue protein attached to proteins as an intracellular targeting signal).. Its function is as follows. Thiol protease that recognizes and hydrolyzes a peptide bond at the C-terminal glycine of either ubiquitin or NEDD8. Essential for parasite blood stage survival. This is Ubiquitin carboxyl-terminal hydrolase UCHL3 from Plasmodium falciparum (isolate 3D7).